The primary structure comprises 488 residues: MTVQTAPQIVKNYIGGEWVESISTKMEAVYNPATGEVIAQVPLSTKVDVEQAVSAANEAFKSWSKTAVPKRARILFKYQQLLVDNWEELAKLITIENGKSYNEAYGEVLRGIECVEFAAGAPTLMMGKQLPDIATGIESGMYRYPIGVIGGITPFNFPMMVPCWMFPLAIACGNTFVLKPSERTPLLAARLAELAEEAGLPKGVLNIVNGAHDVVNGLLEHKLVKAISFVGSQPVAEYVYKKGTENLKRVQALAGAKNHSIVLNDANLELATKQIISAAFGSAGERCMAASVVTVEEEIADQLVGRLVEEANKIVIGNGLDEDVFLGPVIRDNHKERTIGYIDSGVEQGATLVRDGREDTAVKGAGYFVGPTIFDHVTKEMKIWQDEIFAPVLSIVRVKSLDEAIEIANESRFANGACIYTDSGASVRQFRETIESGMLGVNVGVPAPMAFFPFSGWKDSFYGDLHANGTDGVEFYTRKKMLTSRWEK.

Residues F155, K179, E182, R183, and S232 each coordinate NAD(+). Catalysis depends on C287, which acts as the Nucleophile. Residue E387 coordinates NAD(+).

Belongs to the aldehyde dehydrogenase family. IolA subfamily. In terms of assembly, homotetramer.

It catalyses the reaction 3-oxopropanoate + NAD(+) + CoA + H2O = hydrogencarbonate + acetyl-CoA + NADH + H(+). It carries out the reaction 2-methyl-3-oxopropanoate + NAD(+) + CoA + H2O = propanoyl-CoA + hydrogencarbonate + NADH + H(+). It participates in polyol metabolism; myo-inositol degradation into acetyl-CoA; acetyl-CoA from myo-inositol: step 7/7. Catalyzes the oxidation of malonate semialdehyde (MSA) and methylmalonate semialdehyde (MMSA) into acetyl-CoA and propanoyl-CoA, respectively. Is involved in a myo-inositol catabolic pathway. Bicarbonate, and not CO2, is the end-product of the enzymatic reaction. The polypeptide is Malonate-semialdehyde dehydrogenase 2 (Bacillus cereus (strain ZK / E33L)).